The primary structure comprises 451 residues: Probable NADH dehydrogenase (451 aa).

Position 41-71 (41-71 (KLIILGCGWGSYSFLKNLNSIKYDITVISPR)) interacts with FAD. NAD(+) is bound at residue 199-236 (LSFVIVGGGATGIEFTSELNDFFSEDLSRLFPFVPVNE).

It belongs to the NADH dehydrogenase family. It depends on FAD as a cofactor.

The catalysed reaction is a ubiquinone + NADH + 5 H(+)(in) = a ubiquinol + NAD(+) + 4 H(+)(out). In Dictyostelium discoideum (Social amoeba), this protein is Probable NADH dehydrogenase.